A 418-amino-acid polypeptide reads, in one-letter code: Equilibrative nucleotide transporter 3 (418 aa).

The next 11 membrane-spanning stretches (helical) occupy residues methionine 20 to isoleucine 40, valine 56 to glutamate 76, leucine 86 to threonine 106, isoleucine 112 to valine 132, leucine 142 to threonine 162, methionine 186 to phenylalanine 206, tyrosine 264 to tyrosine 284, glycine 291 to glycine 311, lysine 326 to alanine 346, tryptophan 353 to methionine 373, and leucine 392 to isoleucine 412.

It belongs to the SLC29A/ENT transporter (TC 2.A.57) family. Expressed in root tips, vasculature of roots and leaves, and meristems of leaf primordia. Expressed in flowers and siliques.

It is found in the cell membrane. In terms of biological role, nucleoside transporter that functions as a pyrimidine nucleoside carrier in all organs. Has high affinity for adenosine and uridine when expressed in a heterologous system (yeast). Mediates proton-dependent adenosine or uridine transport in Xenopus oocytes. The sequence is that of Equilibrative nucleotide transporter 3 from Arabidopsis thaliana (Mouse-ear cress).